The chain runs to 468 residues: PTS system mannitol-specific EIICB component (468 aa).

The Cytoplasmic segment spans residues 1–25 (MNNQPSFRARVQKFGSFLSGMIMPN). The 331-residue stretch at 14-344 (FGSFLSGMIM…ILKTSKATAE (331 aa)) folds into the PTS EIIC type-2 domain. The chain crosses the membrane as a helical span at residues 26-47 (IGAFIAWGLITALFIPTGWWPN). Residues 48 to 51 (EQLA) lie on the Extracellular side of the membrane. A helical transmembrane segment spans residues 52–72 (ELVGPMITYLLPLLIGYTGGK). Residues 73-135 (MIYDVRGGVV…SGFEMLVNNF (63 aa)) lie on the Cytoplasmic side of the membrane. Residues 136 to 157 (SAGILAAILAIVAFLGIGPVVV) form a helical membrane-spanning segment. Over 158–166 (SFSNVLASG) the chain is Extracellular. The helical transmembrane segment at 167–187 (VEVIIGAGLLPLASIFIEPAK) threads the bilayer. Residues 188 to 274 (VLFLNNAINH…ILMKPTLILA (87 aa)) lie on the Cytoplasmic side of the membrane. A helical transmembrane segment spans residues 275 to 294 (VIAGGMSGVFTFVLFNAGLV). The Extracellular segment spans residues 295-314 (AVPSPGSIFALLAMTPRGEY). The helical transmembrane segment at 315–336 (AGVLAGVIIATVVSFVIASIIL) threads the bilayer. The Cytoplasmic portion of the chain corresponds to 337 to 468 (KTSKATAEDL…YDELVNRLKS (132 aa)). The PTS EIIB type-2 domain occupies 380–468 (NKIIFACDAG…YDELVNRLKS (89 aa)). The Phosphocysteine intermediate; for EIIB activity role is filled by Cys-386. At Cys-386 the chain carries Phosphocysteine; by EIIA.

As to quaternary structure, homodimer.

It is found in the cell membrane. The catalysed reaction is D-mannitol(out) + N(pros)-phospho-L-histidyl-[protein] = D-mannitol 1-phosphate(in) + L-histidyl-[protein]. The phosphoenolpyruvate-dependent sugar phosphotransferase system (sugar PTS), a major carbohydrate active transport system, catalyzes the phosphorylation of incoming sugar substrates concomitantly with their translocation across the cell membrane. The enzyme II CmtAB PTS system is involved in D-mannitol transport. This is PTS system mannitol-specific EIICB component (mtlA) from Halalkalibacterium halodurans (strain ATCC BAA-125 / DSM 18197 / FERM 7344 / JCM 9153 / C-125) (Bacillus halodurans).